A 190-amino-acid polypeptide reads, in one-letter code: Cypemycin cysteine dehydrogenase (decarboxylating) (190 aa).

The protein belongs to the HFCD (homooligomeric flavin containing Cys decarboxylase) superfamily.

The catalysed reaction is [cypemycin](1-18)-L-Cys-L-Leu-L-Val-L-Cys + A = C(3,19),S(21)-[cypemycin](1-18)-L-Ala-L-Leu-N-thioethenyl-L-valinamide + hydrogen sulfide + AH2 + CO2. Its function is as follows. Involved in the biosynthesis of the lanaridin cypemycin. This is Cypemycin cysteine dehydrogenase (decarboxylating) from Streptomyces sp.